The sequence spans 500 residues: Zinc finger protein PLAG1 (500 aa).

Positions 1 to 30 (MATVIPGDLSEVRDTQKVPSGKRKRGETKP) are disordered. The tract at residues 2–84 (ATVIPGDLSE…SKYKLQRHMA (83 aa)) is interaction with KPNA2. Positions 22–25 (KRKR) match the Nuclear localization signal motif. 7 C2H2-type zinc fingers span residues 34–56 (FPCQ…SYSH), 62–86 (YKCI…MATH), 92–114 (HKCN…LHTH), 121–143 (FKCE…LALH), 150–172 (LTCK…LKSH), 185–207 (HQCE…MVVH), and 213–236 (FLCQ…KKSH). The segment at 41-242 (KAFNSVEKLK…KKSHNQELLK (202 aa)) is decreased nuclear import with localization in the nucleus but also in the cytoplasm. Residues 243 to 384 (VKTEPVDFLD…QASSSSKLGL (142 aa)) are repression domain; contains 3 sumoylation motifs and massively decrease transcription activity. Residues 243-500 (VKTEPVDFLD…TLPRFHQAFQ (258 aa)) form an activates transcription; Inhibition of nuclear import due to lack of NLS and KPNA2 interaction region. Glycyl lysine isopeptide (Lys-Gly) (interchain with G-Cter in SUMO) cross-links involve residues lysine 244 and lysine 263. Residues 365 to 388 (GGVPSSSQDSQASSSSKLGLDPQI) form a disordered region. Low complexity predominate over residues 369 to 380 (SSSQDSQASSSS). The massively activates transcription stretch occupies residues 385–500 (DPQIGSLDDG…TLPRFHQAFQ (116 aa)).

Belongs to the krueppel C2H2-type zinc-finger protein family. In terms of assembly, interacts with KPNA2, which escorts protein to the nucleus via interaction with nuclear localization signal. Interacts with E3 SUMO-protein ligase PIAS1, PIAS2 and PIAS4. Sumoylated with SUMO1; which inhibits transcriptional activity, but does not affect nuclear localization. Blockers of sumoylation pathway such as SENP3 and inactive UBE2I increases transcriptional capacity. Sumoylation is increased in the presence of PIAS1. In terms of processing, acetylated by lysine acetyltransferase EP300; which activates transcriptional capacity. Lysine residues that are sumoylated also seem to be target for acetylation. As to expression, expressed in fetal tissues such as lung, liver and kidney. Not detected or weak detection in normal adult tissues, but highly expressed in salivary gland with benign or malignant pleiomorphic adenomas with or without 8q12 aberrations, with preferential occurrence in benign tumors.

It localises to the nucleus. Its function is as follows. Transcription factor whose activation results in up-regulation of target genes, such as IGFII, leading to uncontrolled cell proliferation: when overexpressed in cultured cells, higher proliferation rate and transformation are observed. Other target genes such as CRLF1, CRABP2, CRIP2, PIGF are strongly induced in cells with PLAG1 induction. Proto-oncogene whose ectopic expression can trigger the development of pleomorphic adenomas of the salivary gland and lipoblastomas. Overexpression is associated with up-regulation of IGFII, is frequently observed in hepatoblastoma, common primary liver tumor in childhood. Cooperates with CBFB-MYH11, a fusion gene important for myeloid leukemia. The sequence is that of Zinc finger protein PLAG1 (PLAG1) from Homo sapiens (Human).